The following is a 113-amino-acid chain: MNHYETVFILNPVLSEVQVKETVTKFEEFLTSRGAEMVSKEDWGLKKMAYEIQNKKSGFYHLFEFKVAGEVLIAFETEFRRDERVMRFLTVSLDKHAISWAERRRAKLKSTKA.

It belongs to the bacterial ribosomal protein bS6 family.

Binds together with bS18 to 16S ribosomal RNA. The protein is Small ribosomal subunit protein bS6 of Flavobacterium johnsoniae (strain ATCC 17061 / DSM 2064 / JCM 8514 / BCRC 14874 / CCUG 350202 / NBRC 14942 / NCIMB 11054 / UW101) (Cytophaga johnsonae).